The following is a 452-amino-acid chain: 23S rRNA (uracil(1939)-C(5))-methyltransferase RlmD (452 aa).

The region spanning Met1 to Ala57 is the TRAM domain. The [4Fe-4S] cluster site is built by Cys70, Cys76, Cys79, and Cys157. Positions 269, 298, 303, 319, 347, and 368 each coordinate S-adenosyl-L-methionine. Residue Cys395 is the Nucleophile of the active site.

Belongs to the class I-like SAM-binding methyltransferase superfamily. RNA M5U methyltransferase family. RlmD subfamily.

The catalysed reaction is uridine(1939) in 23S rRNA + S-adenosyl-L-methionine = 5-methyluridine(1939) in 23S rRNA + S-adenosyl-L-homocysteine + H(+). Its function is as follows. Catalyzes the formation of 5-methyl-uridine at position 1939 (m5U1939) in 23S rRNA. This chain is 23S rRNA (uracil(1939)-C(5))-methyltransferase RlmD, found in Neisseria lactamica (strain 020-06).